A 152-amino-acid polypeptide reads, in one-letter code: Deoxyuridine 5'-triphosphate nucleotidohydrolase (152 aa).

Substrate contacts are provided by residues 72–74 (RSG), asparagine 85, and 89–91 (TID).

Belongs to the dUTPase family. Mg(2+) serves as cofactor.

The enzyme catalyses dUTP + H2O = dUMP + diphosphate + H(+). It participates in pyrimidine metabolism; dUMP biosynthesis; dUMP from dCTP (dUTP route): step 2/2. In terms of biological role, this enzyme is involved in nucleotide metabolism: it produces dUMP, the immediate precursor of thymidine nucleotides and it decreases the intracellular concentration of dUTP so that uracil cannot be incorporated into DNA. This Bradyrhizobium sp. (strain ORS 278) protein is Deoxyuridine 5'-triphosphate nucleotidohydrolase.